The chain runs to 122 residues: Large ribosomal subunit protein uL14 (122 aa).

This sequence belongs to the universal ribosomal protein uL14 family. Part of the 50S ribosomal subunit. Forms a cluster with proteins L3 and L19. In the 70S ribosome, L14 and L19 interact and together make contacts with the 16S rRNA in bridges B5 and B8.

Functionally, binds to 23S rRNA. Forms part of two intersubunit bridges in the 70S ribosome. The sequence is that of Large ribosomal subunit protein uL14 from Brachyspira hyodysenteriae (strain ATCC 49526 / WA1).